An 852-amino-acid polypeptide reads, in one-letter code: MSRFFVSGYPSDSSSEEEDLLSSSEEELLSSESEEDNFSSDSEFGNDSDNDSSDSDSDGAPSGPTYFLKKDFMKGSGDGSDSDSDDEGRKVVKSAKDKLLDDMRDSIESINTAKRVGNWTNILAEFEKLGRLLIKVGQQKIGTPNFYVKCLANLEDYINETVTNEKESTKKMNATYSRAFNTVRQRVKKQIKEYQSHMDLFRTKPELFETEEPLEGIASTIAGAPQLNGDEDSNAFTSVGAKTFSPIFTTLKQISETRGKKNIDKVEQIQTLEDLLNDTSSTGTPFELISIYQMLLSIRFDASSNQSFMPIDQWKKNEADLNSFLQLLKSKSKEYQVSELGTVTDDIDIEPPANADGVKVVFGSIASLIERLDDEFTRSLQYSDPHSIEYIQRLKDESIIYKLIVKGQLYVESTTPVEIRSKHEAGQLFRIVMRRLEHIHYKPNQLIAANETEAWKNIDTNVDSTIVPRNSDPNDLVVGLADFLTQNAKSIYGKNALLCSIYYYAINNQYVKARDLFLSSHIYSTIHNSESSLQVMYNRALVQLGLSAFKAGVIEESHQALNEIANSQRLKELLGQGFNSKYPSQATTAEKQKLLPFHMHINLELLECVFMTSSLLIEIPAMAAVSSSSKDSKRKASLKSFKSKLDFHERQYFTGPPESIKDHVVHSSIALQKGDWAKAYKLLSSIKIWKLIPDNEQLLSMMKKQLQVEGLRTYIFTYKSIYTKLSIAKLSAIFDIEKESVYSIIDKMIQPGDISGSIDESKSFVNFTTNDHQRTKLQELAIVMNEKVGLLTEKNEKTASNGYSRKQPMQQQQQQQQQQQQQKEQKELLHEENNRFRYANVNANNDEFQTTA.

Positions 1-90 (MSRFFVSGYP…DSDSDDEGRK (90 aa)) are disordered. Positions 14–57 (SSEEEDLLSSSEEELLSSESEEDNFSSDSEFGNDSDNDSSDSDS) are enriched in acidic residues. The 176-residue stretch at 597–772 (FHMHINLELL…SFVNFTTNDH (176 aa)) folds into the PCI domain. Residues 798–809 (TASNGYSRKQPM) show a composition bias toward polar residues. The tract at residues 798–852 (TASNGYSRKQPMQQQQQQQQQQQQQKEQKELLHEENNRFRYANVNANNDEFQTTA) is disordered. Low complexity predominate over residues 810–822 (QQQQQQQQQQQQQ). Over residues 823–835 (KEQKELLHEENNR) the composition is skewed to basic and acidic residues. Residues 841–852 (VNANNDEFQTTA) show a composition bias toward polar residues.

This sequence belongs to the eIF-3 subunit C family. Component of the eukaryotic translation initiation factor 3 (eIF-3) complex.

The protein resides in the cytoplasm. Component of the eukaryotic translation initiation factor 3 (eIF-3) complex, which is involved in protein synthesis of a specialized repertoire of mRNAs and, together with other initiation factors, stimulates binding of mRNA and methionyl-tRNAi to the 40S ribosome. The eIF-3 complex specifically targets and initiates translation of a subset of mRNAs involved in cell proliferation. This chain is Eukaryotic translation initiation factor 3 subunit C, found in Debaryomyces hansenii (strain ATCC 36239 / CBS 767 / BCRC 21394 / JCM 1990 / NBRC 0083 / IGC 2968) (Yeast).